Reading from the N-terminus, the 330-residue chain is Aspartate--ammonia ligase (330 aa).

The protein belongs to the class-II aminoacyl-tRNA synthetase family. AsnA subfamily.

It localises to the cytoplasm. The catalysed reaction is L-aspartate + NH4(+) + ATP = L-asparagine + AMP + diphosphate + H(+). It functions in the pathway amino-acid biosynthesis; L-asparagine biosynthesis; L-asparagine from L-aspartate (ammonia route): step 1/1. This is Aspartate--ammonia ligase from Actinobacillus succinogenes (strain ATCC 55618 / DSM 22257 / CCUG 43843 / 130Z).